The following is a 467-amino-acid chain: 3-isopropylmalate dehydratase large subunit (467 aa).

[4Fe-4S] cluster is bound by residues cysteine 349, cysteine 408, and cysteine 411.

This sequence belongs to the aconitase/IPM isomerase family. LeuC type 1 subfamily. As to quaternary structure, heterodimer of LeuC and LeuD. [4Fe-4S] cluster is required as a cofactor.

The enzyme catalyses (2R,3S)-3-isopropylmalate = (2S)-2-isopropylmalate. It participates in amino-acid biosynthesis; L-leucine biosynthesis; L-leucine from 3-methyl-2-oxobutanoate: step 2/4. Functionally, catalyzes the isomerization between 2-isopropylmalate and 3-isopropylmalate, via the formation of 2-isopropylmaleate. The protein is 3-isopropylmalate dehydratase large subunit of Dinoroseobacter shibae (strain DSM 16493 / NCIMB 14021 / DFL 12).